Reading from the N-terminus, the 128-residue chain is Glyoxylase-like domain-containing protein (128 aa).

The 120-residue stretch at 6-125 (QISGIEIPAT…EGNTHAICTR (120 aa)) folds into the VOC domain.

The protein operates within mycotoxin biosynthesis. In terms of biological role, glyoxylase-like domain-containing protein; part of the gene cluster that mediates the biosynthesis of the selective antifungal agent ascochitine, an o-quinone methide that plays a possible protective role against other microbial competitors in nature and is considered to be important for pathogenicity of legume-associated Didymella species. The pathway probably begins with the synthesis of a keto-aldehyde intermediate by the ascochitine non-reducing polyketide synthase pksAC from successive condensations of 4 malonyl-CoA units, presumably with a simple acetyl-CoA starter unit. Release of the keto-aldehyde intermediate is consistent with the presence of the C-terminal reductive release domain. The HR-PKS (orf7) probably makes a diketide starter unit which is passed to the non-reducing polyketide synthase pksAC for further extension, producing ascochital and ascochitine. The aldehyde dehydrogenase (orf1), the 2-oxoglutarate-dependent dioxygenase (orf3) and the dehydrogenase (orf9) are probably involved in subsequent oxidations of methyl groups to the carboxylic acid of the heterocyclic ring. The ascochitine gene cluster also includes a gene encoding a short peptide with a cupin domain (orf2) that is often found in secondary metabolite gene clusters and which function has still to be determined. This is Glyoxylase-like domain-containing protein from Didymella fabae (Leaf and pod spot disease fungus).